A 672-amino-acid polypeptide reads, in one-letter code: PHD finger protein MALE STERILITY 1 (672 aa).

The PHD-type zinc finger occupies Arg614–His664.

In terms of tissue distribution, in closed flower buds, especially in anthers.

The protein resides in the nucleus. Transcriptional activator required for anther and post-meiotic pollen development and maturation. Seems to regulate inflorescence branching and floral development. May control tapetal development by directly regulating tapetal programmed cell death (PCD) and breakdown. Implicated in pollen cytosolic components and wall development (e.g. exine and intine formation). This is PHD finger protein MALE STERILITY 1 (MS1) from Arabidopsis thaliana (Mouse-ear cress).